The primary structure comprises 348 residues: AT-hook motif nuclear-localized protein 9 (348 aa).

Positions 18–156 (HRGLSGSGPP…MASVGELMPS (139 aa)) are disordered. The segment covering 31-46 (GSPQQQQGLRHLPNQN) has biased composition (polar residues). The segment covering 47 to 60 (SPFGSGSTGFGSPS) has biased composition (low complexity). Residues 98–106 (KRKRGRPRK) carry the Bipartite nuclear localization signal motif. Residues 98–110 (KRKRGRPRKYGQD) constitute a DNA-binding region (a.T hook 1). Residues 112–131 (SVSLALSSSSVSTITPNNSN) show a composition bias toward low complexity. A DNA-binding region (a.T hook 2) is located at residues 132-144 (KRGRGRPPGSGKK). Positions 157–299 (SSGMSFTPHV…EEEASEVVQE (143 aa)) constitute a PPC domain.

Its subcellular location is the nucleus. Functionally, transcription factor that specifically binds AT-rich DNA sequences related to the nuclear matrix attachment regions (MARs). This chain is AT-hook motif nuclear-localized protein 9, found in Arabidopsis thaliana (Mouse-ear cress).